The primary structure comprises 837 residues: Translation initiation factor IF-2 (837 aa).

The tract at residues 94–252 (QRSPEEIEAE…NAHGFQSPTG (159 aa)) is disordered. A compositionally biased stretch (basic and acidic residues) spans 96–136 (SPEEIEAERKRELDERRAVENAARQKAEEEARVRAEEEARR). The span at 137 to 171 (QPAAPSAPAEAVAAPAPVAEPVREAAPVVAAAPAA) shows a compositional bias: low complexity. 2 stretches are compositionally biased toward basic and acidic residues: residues 172 to 213 (DTRK…EKAP) and 221 to 230 (TTDEESDGFR). The segment covering 231–244 (RGGRGKAKLKKRNA) has biased composition (basic residues). One can recognise a tr-type G domain in the interval 337–506 (PRAPVVTVMG…LLQAEVLELT (170 aa)). Residues 346 to 353 (GHVDHGKT) form a G1 region. 346–353 (GHVDHGKT) lines the GTP pocket. Residues 371 to 375 (GITQH) form a G2 region. A G3 region spans residues 392 to 395 (DTPG). GTP-binding positions include 392–396 (DTPGH) and 446–449 (NKID). The interval 446 to 449 (NKID) is G4. The G5 stretch occupies residues 482-484 (SAK).

The protein belongs to the TRAFAC class translation factor GTPase superfamily. Classic translation factor GTPase family. IF-2 subfamily.

It is found in the cytoplasm. Its function is as follows. One of the essential components for the initiation of protein synthesis. Protects formylmethionyl-tRNA from spontaneous hydrolysis and promotes its binding to the 30S ribosomal subunits. Also involved in the hydrolysis of GTP during the formation of the 70S ribosomal complex. This chain is Translation initiation factor IF-2, found in Pseudomonas fluorescens (strain Pf0-1).